A 203-amino-acid chain; its full sequence is Small ribosomal subunit protein uS4 (203 aa).

The S4 RNA-binding domain occupies 93–153; that stretch reads RRFDNVVFRA…QKSQNLDAVA (61 aa).

Belongs to the universal ribosomal protein uS4 family. Part of the 30S ribosomal subunit. Contacts protein S5. The interaction surface between S4 and S5 is involved in control of translational fidelity.

One of the primary rRNA binding proteins, it binds directly to 16S rRNA where it nucleates assembly of the body of the 30S subunit. Functionally, with S5 and S12 plays an important role in translational accuracy. The chain is Small ribosomal subunit protein uS4 from Chlorobium phaeobacteroides (strain BS1).